Here is a 289-residue protein sequence, read N- to C-terminus: ATP synthase gamma chain (289 aa).

Belongs to the ATPase gamma chain family. F-type ATPases have 2 components, CF(1) - the catalytic core - and CF(0) - the membrane proton channel. CF(1) has five subunits: alpha(3), beta(3), gamma(1), delta(1), epsilon(1). CF(0) has three main subunits: a, b and c.

Its subcellular location is the cell inner membrane. Produces ATP from ADP in the presence of a proton gradient across the membrane. The gamma chain is believed to be important in regulating ATPase activity and the flow of protons through the CF(0) complex. The protein is ATP synthase gamma chain of Janthinobacterium sp. (strain Marseille) (Minibacterium massiliensis).